The sequence spans 498 residues: ATP synthase subunit beta, chloroplastic (498 aa).

172–179 (GGAGVGKT) serves as a coordination point for ATP.

Belongs to the ATPase alpha/beta chains family. As to quaternary structure, F-type ATPases have 2 components, CF(1) - the catalytic core - and CF(0) - the membrane proton channel. CF(1) has five subunits: alpha(3), beta(3), gamma(1), delta(1), epsilon(1). CF(0) has four main subunits: a(1), b(1), b'(1) and c(9-12).

Its subcellular location is the plastid. It localises to the chloroplast thylakoid membrane. It carries out the reaction ATP + H2O + 4 H(+)(in) = ADP + phosphate + 5 H(+)(out). Functionally, produces ATP from ADP in the presence of a proton gradient across the membrane. The catalytic sites are hosted primarily by the beta subunits. This Zea mays (Maize) protein is ATP synthase subunit beta, chloroplastic.